The sequence spans 572 residues: Methionine--tRNA ligase (572 aa).

The 'HIGH' region motif lies at Pro11–Asn21. Residues Cys143, Cys146, Cys156, and Cys159 each contribute to the Zn(2+) site. The short motif at Gln346–Ser350 is the 'KMSKS' region element. Thr349 contributes to the ATP binding site.

It belongs to the class-I aminoacyl-tRNA synthetase family. MetG type 1 subfamily. As to quaternary structure, monomer. It depends on Zn(2+) as a cofactor.

The protein resides in the cytoplasm. The enzyme catalyses tRNA(Met) + L-methionine + ATP = L-methionyl-tRNA(Met) + AMP + diphosphate. Is required not only for elongation of protein synthesis but also for the initiation of all mRNA translation through initiator tRNA(fMet) aminoacylation. The polypeptide is Methionine--tRNA ligase (Dinoroseobacter shibae (strain DSM 16493 / NCIMB 14021 / DFL 12)).